A 552-amino-acid polypeptide reads, in one-letter code: Glutamate--tRNA ligase (552 aa).

Residues 102–112 carry the 'HIGH' region motif; sequence PNPSGPLHIGH.

The protein belongs to the class-I aminoacyl-tRNA synthetase family. Glutamate--tRNA ligase type 2 subfamily.

Its subcellular location is the cytoplasm. The catalysed reaction is tRNA(Glu) + L-glutamate + ATP = L-glutamyl-tRNA(Glu) + AMP + diphosphate. Catalyzes the attachment of glutamate to tRNA(Glu) in a two-step reaction: glutamate is first activated by ATP to form Glu-AMP and then transferred to the acceptor end of tRNA(Glu). The chain is Glutamate--tRNA ligase from Methanothermobacter marburgensis (strain ATCC BAA-927 / DSM 2133 / JCM 14651 / NBRC 100331 / OCM 82 / Marburg) (Methanobacterium thermoautotrophicum).